Here is a 454-residue protein sequence, read N- to C-terminus: Ornithine aminotransferase (454 aa).

K280 is modified (N6-(pyridoxal phosphate)lysine).

The protein belongs to the class-III pyridoxal-phosphate-dependent aminotransferase family. Requires pyridoxal 5'-phosphate as cofactor.

It localises to the cytoplasm. The enzyme catalyses a 2-oxocarboxylate + L-ornithine = L-glutamate 5-semialdehyde + an L-alpha-amino acid. It functions in the pathway amino-acid biosynthesis; L-proline biosynthesis; L-glutamate 5-semialdehyde from L-ornithine: step 1/1. In Emericella nidulans (strain FGSC A4 / ATCC 38163 / CBS 112.46 / NRRL 194 / M139) (Aspergillus nidulans), this protein is Ornithine aminotransferase (otaA).